The following is a 90-amino-acid chain: DNA-directed RNA polymerase subunit Rpo11 (90 aa).

This sequence belongs to the archaeal Rpo11/eukaryotic RPB11/RPC19 RNA polymerase subunit family. As to quaternary structure, part of the RNA polymerase complex.

The protein resides in the cytoplasm. It catalyses the reaction RNA(n) + a ribonucleoside 5'-triphosphate = RNA(n+1) + diphosphate. Its function is as follows. DNA-dependent RNA polymerase (RNAP) catalyzes the transcription of DNA into RNA using the four ribonucleoside triphosphates as substrates. The polypeptide is DNA-directed RNA polymerase subunit Rpo11 (Metallosphaera sedula (strain ATCC 51363 / DSM 5348 / JCM 9185 / NBRC 15509 / TH2)).